The sequence spans 62 residues: UPF0291 protein CLB_2550 (62 aa).

This sequence belongs to the UPF0291 family.

It localises to the cytoplasm. The protein is UPF0291 protein CLB_2550 of Clostridium botulinum (strain ATCC 19397 / Type A).